The primary structure comprises 248 residues: 2,3-bisphosphoglycerate-dependent phosphoglycerate mutase (248 aa).

Substrate-binding positions include 8–15 (RHGESTWN), 21–22 (TG), Arg-60, 87–90 (ERHY), Lys-98, 114–115 (RR), and 183–184 (GN). His-9 acts as the Tele-phosphohistidine intermediate in catalysis. Glu-87 acts as the Proton donor/acceptor in catalysis.

The protein belongs to the phosphoglycerate mutase family. BPG-dependent PGAM subfamily. As to quaternary structure, homodimer.

It carries out the reaction (2R)-2-phosphoglycerate = (2R)-3-phosphoglycerate. The protein operates within carbohydrate degradation; glycolysis; pyruvate from D-glyceraldehyde 3-phosphate: step 3/5. Its function is as follows. Catalyzes the interconversion of 2-phosphoglycerate and 3-phosphoglycerate. In Burkholderia orbicola (strain MC0-3), this protein is 2,3-bisphosphoglycerate-dependent phosphoglycerate mutase.